Consider the following 549-residue polypeptide: Glucose-6-phosphate isomerase (549 aa).

N6-acetyllysine is present on residues lysine 80, lysine 228, and lysine 234. Glutamate 355 (proton donor) is an active-site residue. Active-site residues include histidine 386 and lysine 514.

The protein belongs to the GPI family.

The protein localises to the cytoplasm. It carries out the reaction alpha-D-glucose 6-phosphate = beta-D-fructose 6-phosphate. It functions in the pathway carbohydrate biosynthesis; gluconeogenesis. The protein operates within carbohydrate degradation; glycolysis; D-glyceraldehyde 3-phosphate and glycerone phosphate from D-glucose: step 2/4. In terms of biological role, catalyzes the reversible isomerization of glucose-6-phosphate to fructose-6-phosphate. The chain is Glucose-6-phosphate isomerase from Shigella boydii serotype 4 (strain Sb227).